The following is a 475-amino-acid chain: SAM50-like protein SPAC17C9.06 (475 aa).

In terms of domain architecture, POTRA spans 44-130 (VGISSIRVTG…LDVTIQVKEK (87 aa)).

This sequence belongs to the SAM50/omp85 family. In terms of assembly, associates with the mitochondrial contact site and cristae organizing system (MICOS) complex (also known as MINOS or MitOS complex).

The protein localises to the mitochondrion outer membrane. May be required for the assembly pathway of mitochondrial outer membrane proteins. In Schizosaccharomyces pombe (strain 972 / ATCC 24843) (Fission yeast), this protein is SAM50-like protein SPAC17C9.06.